The sequence spans 475 residues: Ornithine aminotransferase, mitochondrial (475 aa).

A mitochondrion-targeting transit peptide spans 1 to 16; it reads MAATTRRLLYYVSKRF. The disordered stretch occupies residues 23-43; sequence RSYGGLPQSNSKSPPSSSQRL. Residues 29–41 are compositionally biased toward low complexity; it reads PQSNSKSPPSSSQ. Residues 142-143 and Phe-177 each bind pyridoxal 5'-phosphate; that span reads GA. Arg-180 is a binding site for L-ornithine. 265 to 268 contributes to the pyridoxal 5'-phosphate binding site; sequence DEVQ. Lys-294 carries the N6-(pyridoxal phosphate)lysine modification. Ser-323 contributes to the L-ornithine binding site. Residue Thr-324 coordinates pyridoxal 5'-phosphate.

The protein belongs to the class-III pyridoxal-phosphate-dependent aminotransferase family. Homotetramer. It depends on pyridoxal 5'-phosphate as a cofactor.

The protein localises to the mitochondrion matrix. It catalyses the reaction a 2-oxocarboxylate + L-ornithine = L-glutamate 5-semialdehyde + an L-alpha-amino acid. It participates in amino-acid biosynthesis; L-proline biosynthesis; L-glutamate 5-semialdehyde from L-ornithine: step 1/1. Mediates degradation of arginine for nitrogen recycling. Plays a role in non-host disease resistance by regulating pyrroline-5-carboxylate metabolism-induced hypersensitive response. The sequence is that of Ornithine aminotransferase, mitochondrial from Arabidopsis thaliana (Mouse-ear cress).